A 305-amino-acid polypeptide reads, in one-letter code: Ferredoxin--NADP reductase (305 aa).

The FAD site is built by E31, Y42, V82, and D274.

The protein belongs to the ferredoxin--NADP reductase type 2 family. Homodimer. The cofactor is FAD.

The catalysed reaction is 2 reduced [2Fe-2S]-[ferredoxin] + NADP(+) + H(+) = 2 oxidized [2Fe-2S]-[ferredoxin] + NADPH. The sequence is that of Ferredoxin--NADP reductase from Ignicoccus hospitalis (strain KIN4/I / DSM 18386 / JCM 14125).